The chain runs to 370 residues: Coproporphyrin III ferrochelatase (370 aa).

Residues serine 58 and tyrosine 127 each coordinate Fe-coproporphyrin III. The Fe(2+) site is built by histidine 189 and glutamate 276.

This sequence belongs to the ferrochelatase family.

It localises to the cytoplasm. It catalyses the reaction Fe-coproporphyrin III + 2 H(+) = coproporphyrin III + Fe(2+). The protein operates within porphyrin-containing compound metabolism; protoheme biosynthesis. Functionally, involved in coproporphyrin-dependent heme b biosynthesis. Catalyzes the insertion of ferrous iron into coproporphyrin III to form Fe-coproporphyrin III. The polypeptide is Coproporphyrin III ferrochelatase (Corynebacterium glutamicum (strain ATCC 13032 / DSM 20300 / JCM 1318 / BCRC 11384 / CCUG 27702 / LMG 3730 / NBRC 12168 / NCIMB 10025 / NRRL B-2784 / 534)).